Reading from the N-terminus, the 382-residue chain is Mannitol-1-phosphate 5-dehydrogenase (382 aa).

Residue 4 to 15 (AVHFGAGNIGRG) coordinates NAD(+).

It belongs to the mannitol dehydrogenase family. In terms of assembly, monomer.

The enzyme catalyses D-mannitol 1-phosphate + NAD(+) = beta-D-fructose 6-phosphate + NADH + H(+). This chain is Mannitol-1-phosphate 5-dehydrogenase (mtlD), found in Streptococcus mutans serotype c (strain ATCC 700610 / UA159).